We begin with the raw amino-acid sequence, 24 residues long: 60 kDa chaperonin, mitochondrial (24 aa).

It belongs to the chaperonin (HSP60) family. In terms of assembly, forms a single seven-member ring complex, in tight association with the p63 protein. In terms of tissue distribution, testis.

The protein resides in the mitochondrion. Its function is as follows. Implicated in mitochondrial protein import and macromolecular assembly. May facilitate the correct folding of imported proteins. May also prevent misfolding and promote the refolding and proper assembly of unfolded polypeptides generated under stress conditions in the mitochondrial matrix. The protein is 60 kDa chaperonin, mitochondrial of Heliothis virescens (Tobacco budworm moth).